We begin with the raw amino-acid sequence, 66 residues long: Large ribosomal subunit protein uL29 (66 aa).

It belongs to the universal ribosomal protein uL29 family.

This Fervidobacterium nodosum (strain ATCC 35602 / DSM 5306 / Rt17-B1) protein is Large ribosomal subunit protein uL29.